Reading from the N-terminus, the 371-residue chain is Chaperone protein DnaJ (371 aa).

In terms of domain architecture, J spans Asp-5–Gly-69. A CR-type zinc finger spans residues Gly-133–Arg-215. Zn(2+)-binding residues include Cys-146, Cys-149, Cys-163, Cys-166, Cys-189, Cys-192, Cys-203, and Cys-206. CXXCXGXG motif repeat units lie at residues Cys-146 to Gly-153, Cys-163 to Gly-170, Cys-189 to Gly-196, and Cys-203 to Gly-210.

It belongs to the DnaJ family. As to quaternary structure, homodimer. Zn(2+) serves as cofactor.

The protein localises to the cytoplasm. Participates actively in the response to hyperosmotic and heat shock by preventing the aggregation of stress-denatured proteins and by disaggregating proteins, also in an autonomous, DnaK-independent fashion. Unfolded proteins bind initially to DnaJ; upon interaction with the DnaJ-bound protein, DnaK hydrolyzes its bound ATP, resulting in the formation of a stable complex. GrpE releases ADP from DnaK; ATP binding to DnaK triggers the release of the substrate protein, thus completing the reaction cycle. Several rounds of ATP-dependent interactions between DnaJ, DnaK and GrpE are required for fully efficient folding. Also involved, together with DnaK and GrpE, in the DNA replication of plasmids through activation of initiation proteins. This Bacillus cereus (strain 03BB102) protein is Chaperone protein DnaJ.